A 206-amino-acid polypeptide reads, in one-letter code: Large ribosomal subunit protein uL4 (206 aa).

The disordered stretch occupies residues 48–97; sequence THAVKNRSLVSGGGKKPWKQKHTGRARQGSTRASQWVGGGKAMGPKPRDY. The span at 63–72 shows a compositional bias: basic residues; sequence KPWKQKHTGR.

The protein belongs to the universal ribosomal protein uL4 family. Part of the 50S ribosomal subunit.

Functionally, one of the primary rRNA binding proteins, this protein initially binds near the 5'-end of the 23S rRNA. It is important during the early stages of 50S assembly. It makes multiple contacts with different domains of the 23S rRNA in the assembled 50S subunit and ribosome. Forms part of the polypeptide exit tunnel. The polypeptide is Large ribosomal subunit protein uL4 (Anaeromyxobacter dehalogenans (strain 2CP-C)).